The primary structure comprises 739 residues: MICOS complex subunit Mic60 (739 aa).

Residues 23–63 (ANNRQFGGSSSGSGGREQGRRQQEEQGQQGDQGYQGYQSLP) are disordered. Over residues 47–61 (EQGQQGDQGYQGYQS) the composition is skewed to low complexity. The chain crosses the membrane as a helical span at residues 69-89 (AGFGKVVLFVSPLAAVGGVIT). The disordered stretch occupies residues 154 to 219 (VTGLFGGGSG…PAAKPKDNPL (66 aa)). The segment covering 163-198 (GDDKSKKSKVEPVKATPAEEKRPSKPSEVSKTEAKP) has biased composition (basic and acidic residues). Residues 199 to 212 (VSKPAAAAAPAPAA) show a composition bias toward low complexity. Residues 283–339 (TAVATAERAAREAQEKIVACEIALSAAATAQNAKKVEAVRDKIKKLVDHIGNVKDEL) are a coiled coil.

This sequence belongs to the MICOS complex subunit Mic60 family. Component of the mitochondrial contact site and cristae organizing system (MICOS) complex. Interacts with the mitochondria-shaping protein Opa1.

It localises to the mitochondrion inner membrane. Functionally, component of the MICOS complex, a large protein complex of the mitochondrial inner membrane that plays crucial roles in the maintenance of crista junctions, inner membrane architecture, and formation of contact sites to the outer membrane. This is MICOS complex subunit Mic60 from Drosophila melanogaster (Fruit fly).